A 146-amino-acid chain; its full sequence is Large ribosomal subunit protein uL15 (146 aa).

The segment at 1 to 54 (MTLRLNELAPAEGAKRDNRRLGRGIGSGVGKTGGRGVKGQKSRKSGGVRPGFEG) is disordered. Positions 23 to 37 (RGIGSGVGKTGGRGV) are enriched in gly residues.

This sequence belongs to the universal ribosomal protein uL15 family. Part of the 50S ribosomal subunit.

Its function is as follows. Binds to the 23S rRNA. In Acinetobacter baylyi (strain ATCC 33305 / BD413 / ADP1), this protein is Large ribosomal subunit protein uL15.